A 435-amino-acid chain; its full sequence is Nucleoredoxin (435 aa).

At S2 the chain carries N-acetylserine. The 155-residue stretch at 167-321 (PKPFREVIAG…VLELSDSNAA (155 aa)) folds into the Thioredoxin domain.

Belongs to the nucleoredoxin family. Associates with the phosphatase 2A holoenzyme. Interacts with PPP2CA; the interaction is direct. Interacts with DVL1 (via PDZ domain); the interaction is direct and regulated by oxidative stress.

The protein resides in the cytoplasm. The protein localises to the cytosol. It localises to the nucleus. The enzyme catalyses [protein]-dithiol + NAD(+) = [protein]-disulfide + NADH + H(+). The catalysed reaction is [protein]-dithiol + NADP(+) = [protein]-disulfide + NADPH + H(+). In terms of biological role, functions as a redox-dependent negative regulator of the Wnt signaling pathway, possibly by preventing ubiquitination of DVL3 by the BCR(KLHL12) complex. May also function as a transcriptional regulator act as a regulator of protein phosphatase 2A (PP2A). This chain is Nucleoredoxin (NXN), found in Homo sapiens (Human).